Reading from the N-terminus, the 124-residue chain is NADPH-dependent 7-cyano-7-deazaguanine reductase (124 aa).

Cysteine 40 serves as the catalytic Thioimide intermediate. Aspartate 47 serves as the catalytic Proton donor. Substrate-binding positions include 62–64 and 81–82; these read VEL and HE.

Belongs to the GTP cyclohydrolase I family. QueF type 1 subfamily.

Its subcellular location is the cytoplasm. The catalysed reaction is 7-aminomethyl-7-carbaguanine + 2 NADP(+) = 7-cyano-7-deazaguanine + 2 NADPH + 3 H(+). Its pathway is tRNA modification; tRNA-queuosine biosynthesis. Its function is as follows. Catalyzes the NADPH-dependent reduction of 7-cyano-7-deazaguanine (preQ0) to 7-aminomethyl-7-deazaguanine (preQ1). This chain is NADPH-dependent 7-cyano-7-deazaguanine reductase, found in Wolinella succinogenes (strain ATCC 29543 / DSM 1740 / CCUG 13145 / JCM 31913 / LMG 7466 / NCTC 11488 / FDC 602W) (Vibrio succinogenes).